The primary structure comprises 242 residues: Ribosomal RNA small subunit methyltransferase G (242 aa).

S-adenosyl-L-methionine contacts are provided by residues Gly79, Phe84, 130-131, and Arg150; that span reads AE.

Belongs to the methyltransferase superfamily. RNA methyltransferase RsmG family.

The protein resides in the cytoplasm. Specifically methylates the N7 position of a guanine in 16S rRNA. The sequence is that of Ribosomal RNA small subunit methyltransferase G from Levilactobacillus brevis (strain ATCC 367 / BCRC 12310 / CIP 105137 / JCM 1170 / LMG 11437 / NCIMB 947 / NCTC 947) (Lactobacillus brevis).